Reading from the N-terminus, the 223-residue chain is DNA mismatch repair protein MutH (223 aa).

Belongs to the MutH family.

The protein localises to the cytoplasm. Sequence-specific endonuclease that cleaves unmethylated GATC sequences. It is involved in DNA mismatch repair. The protein is DNA mismatch repair protein MutH of Shewanella sp. (strain ANA-3).